We begin with the raw amino-acid sequence, 549 residues long: MKRVLTALAATLPFAANAADAISGAVERQPTNWQAIIMFLIFVVFTLGITYWASKRVRSRNDYYTAGGNITGFQNGLAIAGDYMSAASFLGISALVFTSGYDGLIYSLGFLVGWPIILFLIAERLRNLGRYTFADVASYRLKQGPIRILSACGSLVVVALYLIAQMVGAGKLIELLFGLNYHIAVVLVGVLMMMYVLFGGMLATTWVQIIKAVLLLFGASFMAFMVMKHVGFSFNNLFSEAMAVHPKGVDIMKPGGLVKDPISALSLGLGLMFGTAGLPHILMRFFTVSDAREARKSVFYATGFMGYFYILTFIIGFGAIMLVGANPEYKDAAGHLIGGNNMAAVHLANAVGGNLFLGFISAVAFATILAVVAGLTLAGASAVSHDLYANVFKKGATEREELRVSKITVLILGVIAIILGVLFENQNIAFMVGLAFAIAASCNFPIILLSMYWSKLTTRGAMMGGWLGLITAVVLMILGPTIWVQILGHEKAIFPYEYPALFSISVAFLGIWFFSATDNSAEGARERELFRAQFIRSQTGFGVEQGRAH.

13 helical membrane passes run 33–53 (WQAI…TYWA), 77–97 (LAIA…ALVF), 103–123 (GLIY…LIAE), 148–168 (ILSA…QMVG), 183–203 (IAVV…GMLA), 206–226 (WVQI…AFMV), 262–282 (ISAL…PHIL), 303–323 (GFMG…IMLV), 355–375 (LFLG…VAGL), 404–424 (VSKI…VLFE), 428–448 (IAFM…PIIL), 464–484 (GGWL…TIWV), and 493–513 (IFPY…GIWF).

This sequence belongs to the sodium:solute symporter (SSF) (TC 2.A.21) family.

It localises to the cell inner membrane. Functionally, transports acetate. This Escherichia coli O17:K52:H18 (strain UMN026 / ExPEC) protein is Cation/acetate symporter ActP.